A 279-amino-acid polypeptide reads, in one-letter code: 32 kDa beta-galactoside-binding lectin (279 aa).

2 Galectin domains span residues 13–144 (YRSV…VHWG) and 152–279 (YESG…IQIQ). 213-219 (WGNEERE) is an a beta-D-galactoside binding site.

Post-translationally, the N-terminus is blocked.

Its function is as follows. Binds galactose. The sequence is that of 32 kDa beta-galactoside-binding lectin (lec-1) from Caenorhabditis elegans.